We begin with the raw amino-acid sequence, 80 residues long: DNA-binding protein HU-like (80 aa).

Belongs to the bacterial histone-like protein family.

In terms of biological role, histone-like DNA-binding protein which is capable of wrapping DNA to stabilize it, and thus to prevent its denaturation under extreme environmental conditions. The chain is DNA-binding protein HU-like from Rickettsia rickettsii (strain Sheila Smith).